Here is a 445-residue protein sequence, read N- to C-terminus: Histidinol dehydrogenase (445 aa).

Positions 138, 199, and 222 each coordinate NAD(+). Residues Ser245, Gln267, and His270 each coordinate substrate. Residues Gln267 and His270 each contribute to the Zn(2+) site. Residues Glu335 and His336 each act as proton acceptor in the active site. Substrate-binding residues include His336, Asp369, Glu423, and His428. Residue Asp369 participates in Zn(2+) binding. His428 serves as a coordination point for Zn(2+).

Belongs to the histidinol dehydrogenase family. Requires Zn(2+) as cofactor.

The catalysed reaction is L-histidinol + 2 NAD(+) + H2O = L-histidine + 2 NADH + 3 H(+). It participates in amino-acid biosynthesis; L-histidine biosynthesis; L-histidine from 5-phospho-alpha-D-ribose 1-diphosphate: step 9/9. Functionally, catalyzes the sequential NAD-dependent oxidations of L-histidinol to L-histidinaldehyde and then to L-histidine. In Burkholderia mallei (strain ATCC 23344), this protein is Histidinol dehydrogenase.